The chain runs to 653 residues: Chaperone protein DnaK (653 aa).

At Thr200 the chain carries Phosphothreonine; by autocatalysis. The tract at residues 612–653 is disordered; that stretch reads QGAAGAAGAAGGAGAAAGAEAAGASQQADDVVDAEFKEVKKD. Low complexity predominate over residues 627–639; sequence AAGAEAAGASQQA.

It belongs to the heat shock protein 70 family.

Acts as a chaperone. The chain is Chaperone protein DnaK from Paraburkholderia phymatum (strain DSM 17167 / CIP 108236 / LMG 21445 / STM815) (Burkholderia phymatum).